A 515-amino-acid polypeptide reads, in one-letter code: 1-pyrroline-5-carboxylate dehydrogenase (515 aa).

Active-site residues include E286 and C320.

It belongs to the aldehyde dehydrogenase family. RocA subfamily.

It carries out the reaction L-glutamate 5-semialdehyde + NAD(+) + H2O = L-glutamate + NADH + 2 H(+). Its pathway is amino-acid degradation; L-proline degradation into L-glutamate; L-glutamate from L-proline: step 2/2. The chain is 1-pyrroline-5-carboxylate dehydrogenase from Bacillus mycoides (strain KBAB4) (Bacillus weihenstephanensis).